We begin with the raw amino-acid sequence, 788 residues long: MGSADSKLNFRKAVIQLTTKTQPVEATDNAFWDQFWADTATSVQDVFALVPAAEIRAVREESPSNLATLCYKAVEKLVQGAEGGCHSEKEKQVVLNCSRLLTRVLPYIFEDPDWRGFFWSTVPGAGRGGQGEEEDENARPLAESLLLAIADLLFCPDFTVQNHRRNDVDSAEDVHSLDSCEYIWEAGVGFAHSPQPNYIHDMNRMELLKLLLTCFSEAMYLPPSPESGSTNPWVQFFCSTENRHALPLFTSLLNTVCAYDPVGYGIPYNHLLFSDYREPLVEEAAQVLIVTLDHDSATSTSPTVDGTTTGTAMDDADPPGPENLFVNYLSRIHREEDFQFILKGIARLLSNPLLQTYLPNSTKKIQFHQELLVLFWKLCDFNKKFLFFVLKSSDVLDILVPILYFLNDARADQSRVGLMHIGVFILLLLSGERNFGVRLNKPYSVRVPMDIPVFTGTHADLLIVVFHKIITSGHQRLQPLFDCLLTIVVNVSPYLKSLSMVTANKLLHLLEAFSTTWFLFSASQNHHLVFFLLEVFNNIIQYQFDGNSNLVYAIIRKRAVFHQLANLPTDPPSIHKALQRRRRTPEPLSRTGSQEGTSMEGSRPAAPAEPGTLKTSLVATPGIDKLTEKSQVSEDGTLRSLEPESQQSSAENSPSDGESSQTWREQRRLSNASASGQWSPTSDWILSWKSKLPLQTIMRLLQVLVPQVEKICIDKGLTDESEILRFLQHGTLVGLLPVPHPILIRKYQANSGTAMWFRTYMWGVIYLRNVDPPIWYDTDVKLFEIQRV.

A lipid anchor (N-myristoyl glycine) is attached at glycine 2. The span at 297–313 (ATSTSPTVDGTTTGTAM) shows a compositional bias: low complexity. Disordered stretches follow at residues 297–316 (ATSTSPTVDGTTTGTAMDDA) and 571–680 (PPSI…QWSP). Polar residues-rich tracts occupy residues 590–600 (RTGSQEGTSME) and 643–680 (PESQQSSAENSPSDGESSQTWREQRRLSNASASGQWSP). Residues serine 653 and serine 670 each carry the phosphoserine modification.

It belongs to the hid-1 family.

It localises to the cytoplasm. The protein resides in the golgi apparatus membrane. The polypeptide is Protein HID1 (Hid1) (Mus musculus (Mouse)).